Here is a 294-residue protein sequence, read N- to C-terminus: NAD kinase (294 aa).

D72 functions as the Proton acceptor in the catalytic mechanism. NAD(+)-binding positions include 72–73, 146–147, R157, R174, D176, 187–192, and Q247; these read DG, ND, and TAYALS.

It belongs to the NAD kinase family. Requires a divalent metal cation as cofactor.

The protein localises to the cytoplasm. It carries out the reaction NAD(+) + ATP = ADP + NADP(+) + H(+). In terms of biological role, involved in the regulation of the intracellular balance of NAD and NADP, and is a key enzyme in the biosynthesis of NADP. Catalyzes specifically the phosphorylation on 2'-hydroxyl of the adenosine moiety of NAD to yield NADP. The protein is NAD kinase of Saccharophagus degradans (strain 2-40 / ATCC 43961 / DSM 17024).